The following is a 264-amino-acid chain: uncharacterized protein (264 aa).

The first 22 residues, 1–22 (MKRKLTICLLIALIFYNGNAKA), serve as a signal peptide directing secretion. A helical membrane pass occupies residues 227-247 (LLWVIITTGSIIITALTYVGY).

It is found in the membrane. This is an uncharacterized protein from Bacillus subtilis (strain 168).